Consider the following 450-residue polypeptide: Tol-Pal system protein TolB (450 aa).

A signal peptide spans 1–37; the sequence is MIERNGLQRMPFRLNRRHMISGMASAAVLLGSRQALG.

Belongs to the TolB family. As to quaternary structure, the Tol-Pal system is composed of five core proteins: the inner membrane proteins TolA, TolQ and TolR, the periplasmic protein TolB and the outer membrane protein Pal. They form a network linking the inner and outer membranes and the peptidoglycan layer.

The protein localises to the periplasm. Part of the Tol-Pal system, which plays a role in outer membrane invagination during cell division and is important for maintaining outer membrane integrity. The sequence is that of Tol-Pal system protein TolB from Nitrobacter winogradskyi (strain ATCC 25391 / DSM 10237 / CIP 104748 / NCIMB 11846 / Nb-255).